Consider the following 727-residue polypeptide: 1,4-alpha-glucan branching enzyme GlgB (727 aa).

The active-site Nucleophile is aspartate 405. Glutamate 458 acts as the Proton donor in catalysis.

Belongs to the glycosyl hydrolase 13 family. GlgB subfamily. As to quaternary structure, monomer.

It catalyses the reaction Transfers a segment of a (1-&gt;4)-alpha-D-glucan chain to a primary hydroxy group in a similar glucan chain.. It participates in glycan biosynthesis; glycogen biosynthesis. In terms of biological role, catalyzes the formation of the alpha-1,6-glucosidic linkages in glycogen by scission of a 1,4-alpha-linked oligosaccharide from growing alpha-1,4-glucan chains and the subsequent attachment of the oligosaccharide to the alpha-1,6 position. The polypeptide is 1,4-alpha-glucan branching enzyme GlgB (Yersinia pestis bv. Antiqua (strain Antiqua)).